Reading from the N-terminus, the 309-residue chain is Malate dehydrogenase (309 aa).

NAD(+)-binding positions include 9–14 and aspartate 33; that span reads GAGAVG. Arginine 82 and arginine 88 together coordinate substrate. NAD(+)-binding positions include asparagine 95 and 118–120; that span reads VTN. 2 residues coordinate substrate: asparagine 120 and arginine 151. Histidine 175 acts as the Proton acceptor in catalysis.

Belongs to the LDH/MDH superfamily. MDH type 3 family.

The catalysed reaction is (S)-malate + NAD(+) = oxaloacetate + NADH + H(+). In terms of biological role, catalyzes the reversible oxidation of malate to oxaloacetate. This is Malate dehydrogenase from Thermomicrobium roseum (strain ATCC 27502 / DSM 5159 / P-2).